Reading from the N-terminus, the 216-residue chain is ATP phosphoribosyltransferase (216 aa).

Belongs to the ATP phosphoribosyltransferase family. Short subfamily. As to quaternary structure, heteromultimer composed of HisG and HisZ subunits.

Its subcellular location is the cytoplasm. It catalyses the reaction 1-(5-phospho-beta-D-ribosyl)-ATP + diphosphate = 5-phospho-alpha-D-ribose 1-diphosphate + ATP. The protein operates within amino-acid biosynthesis; L-histidine biosynthesis; L-histidine from 5-phospho-alpha-D-ribose 1-diphosphate: step 1/9. In terms of biological role, catalyzes the condensation of ATP and 5-phosphoribose 1-diphosphate to form N'-(5'-phosphoribosyl)-ATP (PR-ATP). Has a crucial role in the pathway because the rate of histidine biosynthesis seems to be controlled primarily by regulation of HisG enzymatic activity. The sequence is that of ATP phosphoribosyltransferase from Microcystis aeruginosa (strain NIES-843 / IAM M-2473).